The chain runs to 618 residues: 1-deoxy-D-xylulose-5-phosphate synthase (618 aa).

Thiamine diphosphate is bound by residues His-77 and 118 to 120; that span reads GHS. Asp-149 is a Mg(2+) binding site. Thiamine diphosphate-binding positions include 150 to 151, Asn-178, Tyr-285, and Glu-367; that span reads GA. A Mg(2+)-binding site is contributed by Asn-178.

This sequence belongs to the transketolase family. DXPS subfamily. In terms of assembly, homodimer. Mg(2+) is required as a cofactor. Thiamine diphosphate serves as cofactor.

It carries out the reaction D-glyceraldehyde 3-phosphate + pyruvate + H(+) = 1-deoxy-D-xylulose 5-phosphate + CO2. Its pathway is metabolic intermediate biosynthesis; 1-deoxy-D-xylulose 5-phosphate biosynthesis; 1-deoxy-D-xylulose 5-phosphate from D-glyceraldehyde 3-phosphate and pyruvate: step 1/1. Catalyzes the acyloin condensation reaction between C atoms 2 and 3 of pyruvate and glyceraldehyde 3-phosphate to yield 1-deoxy-D-xylulose-5-phosphate (DXP). The sequence is that of 1-deoxy-D-xylulose-5-phosphate synthase from Idiomarina loihiensis (strain ATCC BAA-735 / DSM 15497 / L2-TR).